We begin with the raw amino-acid sequence, 728 residues long: MNLQFRLYLLFILLFISFANGKNEYEDKSTSIIDLLSSKSQFSKLIRRLQRNRLVPYLNRNKGLTLFAPLNEAFPDDSIEPNLLYYIVNTTELDRSVLRTQLKSSDGQQIALKIHYKAETGRAYDKVNNAQIVQSNWRADSGVVQVIDNIIDLPPPALEILSSEKDFSIFHRLSVAWVGEYSSVTMLVPDSSAFLNVYTNTELAYLYSMYAAEDVKTLIHQHILVNQRVYAEDVIEPKTFHYKNGISISMKFDKDQKKLFINDVSTTKYDLLTFSGAIHTVSSLINPEIISFTPAKYLIGIGAAWFSEKLSRERKSISVDKTSKRAILAPTNWAYREIIDIDYHIIENFDLPAPNKYALYVTNIKSGNSVGEDTNALVRIATGSAGEMYVNVETRSIQSENIGNVSLYVLDKDIEPPQPLLSQLILVDEISFSVRYLASLGLGDYTKVTWFLVKNSAWTQLGLVHLVLQQNLELLESVMLDYAFEGIAFYGSSDEAWASGNYTTLSNKEFLIEGVYEDSNSRNKRDLLRINNEIYEVQTRDLLVKDGVVHLVDKVKLPFSVSQKDMIIAGGRKEFLELLDKFEMLDMLDSGYPVVVPSLTGSDVNTKDSSFAERHIIDPEKRNFVISGSRLSVDSSPWISIQDYGYSELGNVYFVQNAIPTKRQNRWRITFISISGLLLSVGICVLCYKIYFKFFRNRFMNQGEREPLLAPADSDTMAGRRNSSSLSV.

An N-terminal signal peptide occupies residues M1 to G21. The Vacuolar segment spans residues K22 to T670. 2 FAS1 domains span residues S29 to I151 and P154 to I285. Residue N89 is glycosylated (N-linked (GlcNAc...) asparagine). N404 and N501 each carry an N-linked (GlcNAc...) asparagine glycan. A helical transmembrane segment spans residues F671–Y691. The Cytoplasmic segment spans residues F692–V728.

The protein resides in the vacuole membrane. Required for the fusion of autophagosomes with the vacuole. The sequence is that of FAS1 domain-containing protein fsc1 (fsc1) from Schizosaccharomyces pombe (strain 972 / ATCC 24843) (Fission yeast).